A 415-amino-acid chain; its full sequence is T-cell-specific guanine nucleotide triphosphate-binding protein 1 (415 aa).

Residues 55–237 (APLHIAVTGE…PKLETKLLQD (183 aa)) form the IRG-type G domain. Residues Gly-66, Gly-68, Lys-69, and Ser-70 each contribute to the GDP site. Thr-89 carries the (Microbial infection) Phosphothreonine; by ROP17 modification. GDP is bound by residues Gly-90, Lys-171, Asp-173, and Asn-219.

The protein belongs to the TRAFAC class dynamin-like GTPase superfamily. IRG family. As to quaternary structure, monomer, homodimer or homotetramer in the presence of GTP. Forms higher order homooligomers in GTP-dependent manner. In terms of assembly, (Microbial infection) Interacts with Toxoplasma gondii ROP18. (Microbial infection) Phosphorylated by Toxoplasma gondii ROP17; the phosphorylation leads to disassembly of IRGB6 (TGTP1/TGTP2) polymers into monomers and dimers. Phosphorylated by Toxoplasma gondii ROP18. In terms of tissue distribution, expressed in thymus and lymph nodes, predominantly T-cells. Not expressed by immature CD4(+) CD8(+) thymocytes (at protein level). Expressed in IFNG-stimulated macrophages. Expressed at low levels in unstimulated astrocytes. Due to sequence similarity with Tgtp2, it is impossible to assign unambiguously experimental data published in the literature to Tgtp1 or Tgtp2 gene.

It is found in the cytoplasm. It localises to the endoplasmic reticulum. The protein localises to the golgi apparatus. Its subcellular location is the parasitophorous vacuole membrane. It carries out the reaction GTP + H2O = GDP + phosphate + H(+). Involved in innate cell-autonomous resistance to intracellular pathogens, such as Toxoplasma gondii. During avirulent type II T.gondii infection, recruited to the parasitophorous vacuole (PV) membrane, leading to PV vesiculation and rupture, and subsequent digestion of the parasite within the cytosol. Not recruited to virulent type I T.gondii PV membrane. May confer an antiviral state for vesicular stomatitis virus. The protein is T-cell-specific guanine nucleotide triphosphate-binding protein 1 (Tgtp1) of Mus musculus (Mouse).